The primary structure comprises 248 residues: L-seryl-tRNA(Sec) kinase (248 aa).

7-14 (GLPGVGKS) contributes to the ATP binding site.

This sequence belongs to the L-seryl-tRNA(Sec) kinase family.

The catalysed reaction is L-seryl-tRNA(Sec) + ATP = O-phospho-L-seryl-tRNA(Sec) + ADP. It participates in aminoacyl-tRNA biosynthesis; selenocysteinyl-tRNA(Sec) biosynthesis; selenocysteinyl-tRNA(Sec) from L-seryl-tRNA(Sec) (archaeal/eukaryal route): step 1/2. Specifically phosphorylates seryl-tRNA(Sec) to O-phosphoseryl-tRNA(Sec), an activated intermediate for selenocysteine biosynthesis. The sequence is that of L-seryl-tRNA(Sec) kinase (pstK) from Methanocaldococcus jannaschii (strain ATCC 43067 / DSM 2661 / JAL-1 / JCM 10045 / NBRC 100440) (Methanococcus jannaschii).